Reading from the N-terminus, the 341-residue chain is Glycerol-3-phosphate dehydrogenase [NAD(P)+] (341 aa).

Residues serine 15, tryptophan 16, arginine 36, and lysine 110 each contribute to the NADPH site. Residues lysine 110, glycine 139, and serine 141 each coordinate sn-glycerol 3-phosphate. Alanine 143 is a binding site for NADPH. Positions 194, 247, 257, 258, and 259 each coordinate sn-glycerol 3-phosphate. Lysine 194 serves as the catalytic Proton acceptor. Arginine 258 lines the NADPH pocket. Valine 282 and glutamate 284 together coordinate NADPH.

Belongs to the NAD-dependent glycerol-3-phosphate dehydrogenase family.

The protein resides in the cytoplasm. The enzyme catalyses sn-glycerol 3-phosphate + NAD(+) = dihydroxyacetone phosphate + NADH + H(+). It carries out the reaction sn-glycerol 3-phosphate + NADP(+) = dihydroxyacetone phosphate + NADPH + H(+). It functions in the pathway membrane lipid metabolism; glycerophospholipid metabolism. In terms of biological role, catalyzes the reduction of the glycolytic intermediate dihydroxyacetone phosphate (DHAP) to sn-glycerol 3-phosphate (G3P), the key precursor for phospholipid synthesis. The chain is Glycerol-3-phosphate dehydrogenase [NAD(P)+] from Xanthomonas campestris pv. campestris (strain 8004).